The sequence spans 267 residues: Putative N-acetylmuramoyl-L-alanine amidase RC0497 (267 aa).

The segment at M1–P25 is disordered. Residues N10–N19 are compositionally biased toward polar residues. Residues T33–G141 enclose the N-acetylmuramoyl-L-alanine amidase domain.

This sequence belongs to the N-acetylmuramoyl-L-alanine amidase 2 family.

It localises to the secreted. It carries out the reaction Hydrolyzes the link between N-acetylmuramoyl residues and L-amino acid residues in certain cell-wall glycopeptides.. The chain is Putative N-acetylmuramoyl-L-alanine amidase RC0497 from Rickettsia conorii (strain ATCC VR-613 / Malish 7).